Reading from the N-terminus, the 362-residue chain is 2-aminoethylphosphonate--pyruvate transaminase (362 aa).

K193 is modified (N6-(pyridoxal phosphate)lysine).

It belongs to the class-V pyridoxal-phosphate-dependent aminotransferase family. PhnW subfamily. In terms of assembly, homodimer. Requires pyridoxal 5'-phosphate as cofactor.

The enzyme catalyses (2-aminoethyl)phosphonate + pyruvate = phosphonoacetaldehyde + L-alanine. Functionally, involved in phosphonate degradation. In Bacteroides fragilis (strain YCH46), this protein is 2-aminoethylphosphonate--pyruvate transaminase.